The chain runs to 302 residues: Probable 2-(5''-triphosphoribosyl)-3'-dephosphocoenzyme-A synthase 1 (302 aa).

Belongs to the CitG/MdcB family.

It catalyses the reaction 3'-dephospho-CoA + ATP = 2'-(5''-triphospho-alpha-D-ribosyl)-3'-dephospho-CoA + adenine. The sequence is that of Probable 2-(5''-triphosphoribosyl)-3'-dephosphocoenzyme-A synthase 1 from Salmonella paratyphi A (strain ATCC 9150 / SARB42).